The sequence spans 362 residues: H-2 class I histocompatibility antigen, L-D alpha chain (362 aa).

The N-terminal stretch at 1 to 24 (MGAMAPRTLLLLLAAALAPTQTRA) is a signal peptide. The interval 25 to 114 (GPHSMRYFET…LLGYYNQSAG (90 aa)) is alpha-1. Topologically, residues 25–309 (GPHSMRYFET…PPPSTDSYMV (285 aa)) are extracellular. Residue asparagine 110 is glycosylated (N-linked (GlcNAc...) asparagine). Residues 115-206 (GTHTLQWMYG…KNGNATLLRT (92 aa)) form an alpha-2 region. Residues cysteine 125 and cysteine 188 are joined by a disulfide bond. N-linked (GlcNAc...) asparagine glycans are attached at residues asparagine 200 and asparagine 280. An alpha-3 region spans residues 207-298 (DSPKAHVTHH…GLPEPLTLRW (92 aa)). One can recognise an Ig-like C1-type domain in the interval 209 to 297 (PKAHVTHHPR…EGLPEPLTLR (89 aa)). Cysteine 227 and cysteine 283 form a disulfide bridge. Residues 299 to 309 (EPPPSTDSYMV) form a connecting peptide region. The chain crosses the membrane as a helical span at residues 310–331 (IVAVLGVLGAMAIIGAVVAFVM). Residues 332 to 362 (KRRRNTGGKGGDYALAPGSQSSEMSLRDCKA) are Cytoplasmic-facing. The tract at residues 340 to 362 (KGGDYALAPGSQSSEMSLRDCKA) is disordered. Phosphoserine is present on residues serine 353 and serine 356.

It belongs to the MHC class I family. As to quaternary structure, heterodimer of an alpha chain and a beta chain (beta-2-microglobulin).

The protein resides in the membrane. Its function is as follows. Involved in the presentation of foreign antigens to the immune system. The protein is H-2 class I histocompatibility antigen, L-D alpha chain (H2-L) of Mus musculus (Mouse).